The following is a 369-amino-acid chain: Probable trehalose-phosphate phosphatase I (369 aa).

It belongs to the trehalose phosphatase family. It depends on a divalent metal cation as a cofactor.

The catalysed reaction is alpha,alpha-trehalose 6-phosphate + H2O = alpha,alpha-trehalose + phosphate. The protein operates within glycan biosynthesis; trehalose biosynthesis. Removes the phosphate from trehalose 6-phosphate to produce free trehalose. Trehalose accumulation in plant may improve abiotic stress tolerance. The sequence is that of Probable trehalose-phosphate phosphatase I (TPPI) from Arabidopsis thaliana (Mouse-ear cress).